Here is a 440-residue protein sequence, read N- to C-terminus: MSTATPKVGFVSLGCPKATVDSERILTQLRMEGYEIVPTYQDADVVVVNTCGFIDSAKAESLDAIGEAIAENGKVIVTGCMGVAEDSIRDVHPSVLAVTGPQQYEQVVSAVHEVVPPKTEHNPLIDLVPPQGIKLTPRHYAYLKISEGCNHSCSFCIIPSMRGKLVSRPVGDVLSEAERLVKAGVKELLVISQDTSAYGVDMKYKLDFWNGQPVKTRMLELCEALSSMGVWVRLHYVYPYPNVDDVIPLMAAGKLLPYLDIPFQHASPKVLKSMKRPAFEDKTLARIKKWREICPELTIRSTFIVGFPGETEEDFQYLLDWLTEAQLDRVGCFQYSPVEGAPANDLGLEPVPDDVKQERWERFMAHQQAISSARLQAKIGLEMDVLVDEVDGEGAVARSWADAPEIDGSVFIDSTAVKPGDKVRVRIVDADEYDMWGELV.

The MTTase N-terminal domain maps to 6–116 (PKVGFVSLGC…VVSAVHEVVP (111 aa)). Residues C15, C51, C80, C149, C153, and C156 each contribute to the [4Fe-4S] cluster site. Positions 135–374 (LTPRHYAYLK…AHQQAISSAR (240 aa)) constitute a Radical SAM core domain. Residues 376 to 440 (QAKIGLEMDV…DEYDMWGELV (65 aa)) enclose the TRAM domain.

It belongs to the methylthiotransferase family. RimO subfamily. [4Fe-4S] cluster is required as a cofactor.

The protein resides in the cytoplasm. The catalysed reaction is L-aspartate(89)-[ribosomal protein uS12]-hydrogen + (sulfur carrier)-SH + AH2 + 2 S-adenosyl-L-methionine = 3-methylsulfanyl-L-aspartate(89)-[ribosomal protein uS12]-hydrogen + (sulfur carrier)-H + 5'-deoxyadenosine + L-methionine + A + S-adenosyl-L-homocysteine + 2 H(+). Catalyzes the methylthiolation of an aspartic acid residue of ribosomal protein uS12. This is Ribosomal protein uS12 methylthiotransferase RimO from Ectopseudomonas mendocina (strain ymp) (Pseudomonas mendocina).